Here is a 498-residue protein sequence, read N- to C-terminus: Type VI secretion system sheath protein TssC1 (498 aa).

As to quaternary structure, forms a heterodimer with TssB1. Heterodimers assemble to form the sheath of the T6SS machinery. Interacts with TssA1.

In terms of biological role, core component of the H1 type VI (H1-T6SS) secretion system that plays a role in the release of toxins targeting both eukaryotic and prokaryotic species. Forms the sheath of the structure by assembling into tubules together with TssB1 resulting in the stacking of cogwheel-like structures showing predominantly a 12-fold symmetry. The sheath contracts to provide the energy needed for effector delivery. The protein is Type VI secretion system sheath protein TssC1 of Pseudomonas aeruginosa (strain ATCC 15692 / DSM 22644 / CIP 104116 / JCM 14847 / LMG 12228 / 1C / PRS 101 / PAO1).